A 330-amino-acid chain; its full sequence is Zinc finger protein Gfi-1b (330 aa).

The SNAG domain stretch occupies residues 1–20; that stretch reads MPRSFLVKSKKAHTYHQPRV. Residues 1 to 42 are disordered; sequence MPRSFLVKSKKAHTYHQPRVQEDEPLWPPALTPVPRDQAPSN. Lys-8 is subject to N6,N6-dimethyllysine. Residues 91 to 330 form an interaction with ARIH2 region; the sequence is GDSPLSDSPP…RHRESQHNLK (240 aa). 6 consecutive C2H2-type zinc fingers follow at residues 163 to 186, 192 to 214, 220 to 242, 248 to 270, 276 to 298, and 304 to 327; these read YHCVKCNKVFSTPHGLEVHVRRSH, FACDICGKTFGHAVSLEQHTHVH, FECRMCGKAFKRSSTLSTHLLIH, YPCQFCGKRFHQKSDMKKHTYIH, HKCQVCGKAFSQSSNLITHSRKH, and FSCELCTKGFQRKVDLRRHRESQH. The mediates interaction with GATA1 stretch occupies residues 164–330; that stretch reads HCVKCNKVFS…RHRESQHNLK (167 aa).

In terms of assembly, component of a RCOR-GFI-KDM1A-HDAC complex. Interacts directly with RCOR1, KDM1A and HDAC2. Forms a complex with GATA1. Interacts with histone methyltransferases EHMT2 and SUV39H1. Interacts with ARIH2 (via RING-type 2). Interacts with RUNX1T1. Methylation at Lys-8 in the SNAG domain seems required for the recruitment of the corepressor complex. Expressed in bone marrow and fetal liver, but also detectable in fetal spleen, fetal thymus, and testes. Detected in hematopoietic stem cells, erythroblasts, and megakaryocytes. Overexpressed in bone marrow of patients with erythroleukemia and megakaryocytic leukemia as well as in their corresponding leukemic cell lines, and markedly repressed in severe aplastic anemia (SAA).

The protein resides in the nucleus. Its function is as follows. Essential proto-oncogenic transcriptional regulator necessary for development and differentiation of erythroid and megakaryocytic lineages. Component of a RCOR-GFI-KDM1A-HDAC complex that suppresses, via histone deacetylase (HDAC) recruitment, a number of genes implicated in multilineage blood cell development and controls hematopoietic differentiation. Transcriptional repressor or activator depending on both promoter and cell type context; represses promoter activity of SOCS1 and SOCS3 and thus, may regulate cytokine signaling pathways. Cooperates with GATA1 to repress target gene transcription, such as the apoptosis regulator BCL2L1; GFI1B silencing in leukemic cell lines markedly increase apoptosis rate. Inhibits down-regulation of MYC and MYB as well as the cyclin-dependent kinase inhibitor CDKN1A/P21WAF1 in IL6-treated myelomonocytic cells. Represses expression of GATA3 in T-cell lymphomas and inhibits GATA1-mediated transcription; as GATA1 also mediates erythroid GFI1B transcription, both GATA1 and GFI1B participate in a feedback regulatory pathway controlling the expression of GFI1B gene in erythroid cells. Suppresses GATA1-mediated stimulation of GFI1B promoter through protein interaction. Binds to gamma-satellite DNA and to its own promoter, auto-repressing its own expression. Alters histone methylation by recruiting histone methyltransferase to target genes promoters. Plays a role in heterochromatin formation. The polypeptide is Zinc finger protein Gfi-1b (GFI1B) (Homo sapiens (Human)).